The sequence spans 2562 residues: Zinc finger homeobox protein 2 (2562 aa).

Over residues 1–13 the composition is skewed to polar residues; it reads MATLNSASPSGTV. Disordered stretches follow at residues 1-88 and 337-410; these read MATL…PPKD and PSPP…DPPP. Residues 56-73 are compositionally biased toward basic and acidic residues; it reads GGERLESGSDLDPPKEIG. 2 C2H2-type zinc fingers span residues 446-469 and 501-525; these read LKCPKCNWHYKYQQTLDVHMREKH and YRCDVCNYSTTTKGNLSIHMQSDKH. Disordered stretches follow at residues 530–559, 603–651, and 669–705; these read QGFQAGPGGQASPPEASLPPTSVGDKEPKT, PPGL…PDKP, and RKFPTAAPGSLSPETHLPPSQLLGSSSDGLPTSPSPD. Positions 609-622 are enriched in pro residues; that stretch reads PGPPPPPGAAPTNP. The segment covering 690 to 704 has biased composition (polar residues); the sequence is LLGSSSDGLPTSPSP. 3 C2H2-type zinc fingers span residues 752–776, 815–839, and 864–888; these read HRCKLCCYGTQLKANFQLHLKTDKH, LRCNICDFESNSKEKMQLHTRGSAH, and YHCLLCAWDTPSRLALLQHLRTPAH. The disordered stretch occupies residues 923 to 966; the sequence is RLQTPGKASDTPLAQPPTSEKDAQNKTEQQASEVTEDRSGPPRD. Residues 1003-1026 form a C2H2-type 6 zinc finger; the sequence is YRCPLCQEQLVGRPALHFHLSHLH. 2 disordered regions span residues 1058–1126 and 1140–1166; these read NPVE…PAPR and MSEEEEGAMGEPRSAEPTPADSRHPLT. Pro residues-rich tracts occupy residues 1091–1101 and 1114–1124; these read SPDPPLEPPLA and DQPPSPAPSPA. 2 consecutive C2H2-type zinc fingers follow at residues 1185–1211 and 1242–1266; these read YKCTVCKESFTQKNILLVHYNSVSHLH and FKCTVCRVSYNQSSTLEIHMRSVLH. Basic and acidic residues predominate over residues 1278-1305; the sequence is RAEGAERGQEEFKEGETEGEAGTEKKGP. The tract at residues 1278-1313 is disordered; it reads RAEGAERGQEEFKEGETEGEAGTEKKGPDPGGFMSG. A C2H2-type 9 zinc finger spans residues 1474–1497; that stretch reads LACGACGKLFSNMLILKTHEEHVH. The disordered stretch occupies residues 1520–1584; sequence LYPPPVEPPK…EGSRGSLPPA (65 aa). Residues 1521–1531 are compositionally biased toward pro residues; the sequence is YPPPVEPPKPP. Positions 1589 to 1648 form a DNA-binding region, homeobox 1; the sequence is RRFSRTKFTEFQTQALQSFFETSAYPKDGEVERLASLLGLASRVVVVWFQNARQKARKNA. Residues 1664–1687 form a C2H2-type 10; degenerate zinc finger; the sequence is SGCRRCHATFACVFELVRHLKKCY. The segment at 1689–1760 is disordered; that stretch reads DQPPEEEEEA…EGKAPPSPPV (72 aa). Residues 1690-1713 show a composition bias toward acidic residues; it reads QPPEEEEEAERGEEEEEVEEEEAE. Over residues 1743-1752 the composition is skewed to basic and acidic residues; it reads TRPESKESEG. The C2H2-type 11 zinc finger occupies 1761-1783; the sequence is YACDQCAASFPSQDLLTTHHRLH. 7 disordered regions span residues 1814-1853, 1907-1934, 1971-2057, 2114-2136, 2186-2210, 2263-2313, and 2391-2429; these read SGTSSVTGTPLKRKHDDGSLSPTGSEAGGGGEGEPPKDKR, RKGQFRSTPGGVAGPAVKPTVPPSPAPF, PLPF…DSMG, KKAKLQGTAPPGSGGSSEGTSAA, PAPETPLAPKGPPATTPASSVPLGA, QTAG…PNSS, and LQQPPQAPEPTATAPPKPPELPASGEGESSEADELLTGS. The homeobox 2 DNA-binding region spans 1851–1910; the sequence is DKRLRTTILPEQLEILYRWYMQDSNPTRKMLDCISEEVGLKKRVVQVWFQNTRARERKGQ. The span at 1985–1996 shows a compositional bias: pro residues; sequence TPEPPPPLPPPA. Residues 2008-2037 are compositionally biased toward low complexity; the sequence is KASPESEACSPSAGDLSDSSASSLAEPESP. The span at 2038 to 2051 shows a compositional bias: gly residues; sequence GAGGTSGGPGGGTG. Positions 2058 to 2117 form a DNA-binding region, homeobox 3; the sequence is QRRYRTQMSSLQLKIMKACYEAYRTPTMQECEVLGEEIGLPKRVIQVWFQNARAKEKKAK. Positions 2188–2200 are enriched in pro residues; the sequence is PETPLAPKGPPAT. Residues 2275-2286 are compositionally biased toward polar residues; it reads PVSNQTNSSTDP. Residues 2295 to 2305 show a composition bias toward basic and acidic residues; the sequence is SGDKVSGERKP. Residues 2395–2411 show a composition bias toward pro residues; it reads PQAPEPTATAPPKPPEL. The C2H2-type 12; degenerate zinc-finger motif lies at 2441–2461; sequence YLCRQCKMAFDGEAPATAHQR. A C2H2-type 13 zinc finger spans residues 2485 to 2509; the sequence is YHCLACEVLLSGREALASHLRSSAH. 2 disordered regions span residues 2506-2525 and 2540-2562; these read SSAHRRKAAPPPGGPPITVT and EEARLPHTDPNPKTTTTSTLLAL. Low complexity predominate over residues 2553–2562; that stretch reads TTTTSTLLAL.

Expressed in brain (at protein level). Expressed at the highest levels in the pyramidal cell layer of the hippocampus, the suprachiasmatic nucleus, laterodorsal thalamic nucleus, lateral geniculate nucleus, substantia nigra pars compacta, and magnocellular part of the red nucleus (at protein level). Highly expressed in dorsal root ganglia. Expressed at lower levels in kidney, stomach, liver, heart and testis.

It localises to the nucleus. Functionally, transcriptional regulator that is critical for the regulation of pain perception and processing of noxious stimuli. This Mus musculus (Mouse) protein is Zinc finger homeobox protein 2.